Reading from the N-terminus, the 364-residue chain is Ribosomal RNA large subunit methyltransferase F (364 aa).

The segment at 1–30 is disordered; it reads MTNKRKSAKPLEPAKRAPKPRTKKSRDLSA.

This sequence belongs to the methyltransferase superfamily. METTL16/RlmF family.

It localises to the cytoplasm. The enzyme catalyses adenosine(1618) in 23S rRNA + S-adenosyl-L-methionine = N(6)-methyladenosine(1618) in 23S rRNA + S-adenosyl-L-homocysteine + H(+). Specifically methylates the adenine in position 1618 of 23S rRNA. This Vibrio vulnificus (strain CMCP6) protein is Ribosomal RNA large subunit methyltransferase F.